The chain runs to 510 residues: GTPase Der (510 aa).

EngA-type G domains are found at residues 3–167 and 230–405; these read LKLA…GPEA and IRLA…KDWT. GTP is bound by residues 9–16, 56–60, 119–122, 236–243, 283–287, and 348–351; these read GRPNVGKS, DTAGF, NKAE, GRPNAGKS, DTAGL, and SKWD. One can recognise a KH-like domain in the interval 406 to 490; it reads ARAKTGDLNR…PIRLFVRQGK (85 aa).

Belongs to the TRAFAC class TrmE-Era-EngA-EngB-Septin-like GTPase superfamily. EngA (Der) GTPase family. As to quaternary structure, associates with the 50S ribosomal subunit.

Functionally, GTPase that plays an essential role in the late steps of ribosome biogenesis. The protein is GTPase Der of Hyphomonas neptunium (strain ATCC 15444).